The sequence spans 172 residues: Translocon-associated protein subunit delta (172 aa).

Residues 1 to 24 form the signal peptide; it reads MAALASLGALALLLLSGLSCCSEA. Cys25 and Cys56 are oxidised to a cystine. The Lumenal segment spans residues 25–143; sequence CVEPQITPSY…SVDHRGTWNG (119 aa). Lys72 participates in a covalent cross-link: Glycyl lysine isopeptide (Lys-Gly) (interchain with G-Cter in ubiquitin). The chain crosses the membrane as a helical span at residues 144–164; that stretch reads PWVSTEVLAAAIGLVIYYLAF. Over 165–172 the chain is Cytoplasmic; sequence SAKSHIQA.

Belongs to the TRAP-delta family. Heterotetramer of TRAP-alpha, TRAP-beta, TRAP-delta and TRAP-gamma.

The protein resides in the endoplasmic reticulum membrane. In terms of biological role, TRAP proteins are part of a complex whose function is to bind calcium to the ER membrane and thereby regulate the retention of ER resident proteins. The polypeptide is Translocon-associated protein subunit delta (SSR4) (Bos taurus (Bovine)).